The following is a 461-amino-acid chain: Phenolic glucoside malonyltransferase 1 (461 aa).

Residue His167 is the Proton acceptor of the active site. An HXXXD motif motif is present at residues 167–171 (HAAQD). A malonyl-CoA-binding site is contributed by 281–282 (ST). Catalysis depends on Asp400, which acts as the Proton acceptor. The DFGWG motif signature appears at 400–404 (DFGWG).

This sequence belongs to the plant acyltransferase family. Phenolic glucoside malonyltransferase subfamily. In terms of tissue distribution, expressed in all tissues. Most highly expressed in the abdomen and especially in the gut.

The catalysed reaction is a flavonol 3-O-beta-D-glucoside + malonyl-CoA = a flavonol 3-O-(6-O-malonyl-beta-D-glucoside) + CoA. The enzyme catalyses kaempferol 3-O-beta-D-glucoside + malonyl-CoA = kaempferol 3-O-(6-O-malonyl-beta-D-glucoside) + CoA. It catalyses the reaction quercetin 3-O-beta-D-glucoside + malonyl-CoA = quercetin 3-O-(6-O-malonyl-beta-D-glucoside) + CoA. It carries out the reaction a flavonol 7-O-beta-D-glucoside + malonyl-CoA = a flavonol 7-O-(6-O-malonyl-beta-D-glucoside) + CoA. The catalysed reaction is (2S)-naringenin 7-O-beta-D-glucoside + malonyl-CoA = (2S)-naringenin 7-O-(6-O-malonyl-beta-D-glucoside) + CoA. The enzyme catalyses kaempferol 7-O-beta-D-glucoside + malonyl-CoA = kaempferol 7-O-(6-O-malonyl-beta-D-glucoside) + CoA. It catalyses the reaction apigenin 7-O-beta-D-glucoside + malonyl-CoA = apigenin 7-O-(6-O-malonyl-beta-D-glucoside) + CoA. It carries out the reaction rhaponticin + malonyl-CoA = 6-O-malonyl-rhaponticin + CoA. In terms of biological role, phenolic glucoside malonyltransferase that neutralizes phenolic glycosides in host plants. Catalyzes the transfer of a malonyl group from malonyl-CoA to the phenolic glycosides, leading to their detoxification. Phenolic glycosides, which are among the most abundant plant secondary metabolites, act as plant defense compounds: they strongly affect growth, development and behavior of insect herbivores. Has malonyltransferase activity against flavonoids kaempferol 3-O-glucoside, kaempferol 7-O-glucoside, isoquercetin (quercetin 3-O-beta-D-glucopyranoside), apigetrin (apigenin 7-O-beta-D-glucoside) and prunin (naringenin 7-O-beta-D-glucoside). Also has activity toward non-flavonoid rhaponticin, but with lower efficiency. The polypeptide is Phenolic glucoside malonyltransferase 1 (Bemisia tabaci (Sweetpotato whitefly)).